The following is a 222-amino-acid chain: Probable septum site-determining protein MinC (222 aa).

The protein belongs to the MinC family. As to quaternary structure, interacts with MinD and FtsZ.

Functionally, cell division inhibitor that blocks the formation of polar Z ring septums. Rapidly oscillates between the poles of the cell to destabilize FtsZ filaments that have formed before they mature into polar Z rings. Prevents FtsZ polymerization. The protein is Probable septum site-determining protein MinC of Lysinibacillus sphaericus (strain C3-41).